The sequence spans 152 residues: Nucleoside diphosphate kinase A (152 aa).

Positions 12, 60, 88, and 94 each coordinate ATP. Residue Lys100 forms a Glycyl lysine isopeptide (Lys-Gly) (interchain with G-Cter in ubiquitin) linkage. Residues Arg105 and Asn115 each coordinate ATP. The active-site Pros-phosphohistidine intermediate is His118. A phosphoserine mark is found at Ser120, Ser122, and Ser125.

It belongs to the NDK family. As to quaternary structure, hexamer of two different chains: An and B (A6, A5B, A4B2, A3B3, A2B4, AB5, B6). Interacts with PRUNE1. Component of the SET complex, composed of at least ANP32A, APEX1, HMGB2, NME1, SET and TREX1. Within this complex, interacts directly with SET. Also interacts with TREX1, but only following translocation to the nucleus. The cofactor is Mg(2+).

The protein localises to the cytoplasm. Its subcellular location is the nucleus. It catalyses the reaction a 2'-deoxyribonucleoside 5'-diphosphate + ATP = a 2'-deoxyribonucleoside 5'-triphosphate + ADP. The enzyme catalyses a ribonucleoside 5'-diphosphate + ATP = a ribonucleoside 5'-triphosphate + ADP. Autophosphorylation at His-118 increases serine/threonine protein kinase activity of the enzyme. Interaction with the SET complex inhibits exonuclease activity. In terms of biological role, major role in the synthesis of nucleoside triphosphates other than ATP. The ATP gamma phosphate is transferred to the NDP beta phosphate via a ping-pong mechanism, using a phosphorylated active-site intermediate. Possesses nucleoside-diphosphate kinase, serine/threonine-specific protein kinase, geranyl and farnesyl pyrophosphate kinase, histidine protein kinase and 3'-5' exonuclease activities. Involved in cell proliferation, differentiation and development, signal transduction, G protein-coupled receptor endocytosis, and gene expression. Required for neural development including neural patterning and cell fate determination. During GZMA-mediated cell death, works in concert with TREX1. NME1 nicks one strand of DNA and TREX1 removes bases from the free 3' end to enhance DNA damage and prevent DNA end reannealing and rapid repair. The polypeptide is Nucleoside diphosphate kinase A (NME1) (Canis lupus familiaris (Dog)).